The chain runs to 528 residues: Inositol-3-phosphate synthase (528 aa).

Residues Gly66, Gly67, Asn68, Asn69, Asp140, Gln187, Arg190, Thr228, Ala229, Asn230, Thr231, Gly279, Asp304, Ser307, Asn338, Asn339, Asp340, Lys353, Gly392, Asp393, Asp421, and Ser422 each coordinate NAD(+).

The protein belongs to the myo-inositol 1-phosphate synthase family. It depends on NAD(+) as a cofactor.

The protein resides in the cytoplasm. The protein localises to the cytosol. The catalysed reaction is D-glucose 6-phosphate = 1D-myo-inositol 3-phosphate. Its pathway is polyol metabolism; myo-inositol biosynthesis; myo-inositol from D-glucose 6-phosphate: step 1/2. Activated by ammonium ions. Its function is as follows. Key enzyme in myo-inositol biosynthesis pathway that catalyzes the conversion of glucose 6-phosphate to 1-myo-inositol 1-phosphate in a NAD-dependent manner. Rate-limiting enzyme in the synthesis of all inositol-containing compounds. De novo-synthesized myo-inositol is essential for incorporation into GPI (glycosylphosphatidylinositol) glycolipids in the bloodstream form. The polypeptide is Inositol-3-phosphate synthase (Trypanosoma brucei brucei).